Consider the following 303-residue polypeptide: Aspartate carbamoyltransferase catalytic subunit (303 aa).

2 residues coordinate carbamoyl phosphate: Arg51 and Thr52. Lys80 is a binding site for L-aspartate. Arg101, His129, and Gln132 together coordinate carbamoyl phosphate. The L-aspartate site is built by Arg162 and Arg221. The carbamoyl phosphate site is built by Leu260 and Pro261.

This sequence belongs to the aspartate/ornithine carbamoyltransferase superfamily. ATCase family. Heterooligomer of catalytic and regulatory chains.

It catalyses the reaction carbamoyl phosphate + L-aspartate = N-carbamoyl-L-aspartate + phosphate + H(+). Its pathway is pyrimidine metabolism; UMP biosynthesis via de novo pathway; (S)-dihydroorotate from bicarbonate: step 2/3. Its function is as follows. Catalyzes the condensation of carbamoyl phosphate and aspartate to form carbamoyl aspartate and inorganic phosphate, the committed step in the de novo pyrimidine nucleotide biosynthesis pathway. The sequence is that of Aspartate carbamoyltransferase catalytic subunit from Saccharolobus islandicus (strain Y.N.15.51 / Yellowstone #2) (Sulfolobus islandicus).